The primary structure comprises 309 residues: MSAGQLRRHEIGKVTALTNPLSGHGAAVKAAHGAIARLKHRGVDVVEIVGGDAHDARHLLAAAVAKGTDAVMVTGGDGVVSNALQVLAGTDIPLGIIPAGTGNDHAREFGLPTKNPKAAADIVVDGWTETIDLGRIQDDNGIEKWFGTVAATGFDSLVNDRANRMRWPHGRMRYYIAMLAELSRLRPLPFRLVLDGTEEIVADLTLADFGNTRSYGGGLLICPNADHSDGLLDITMAQSDSRTKLLRLFPTIFKGAHVELDEVSTTRAKTVHVECPGINVYADGDFACPLPAEISAVPAALQVLRPRHG.

One can recognise a DAGKc domain in the interval 9 to 140; the sequence is HEIGKVTALT…IDLGRIQDDN (132 aa). ATP-binding positions include 19 to 23, 76 to 82, and T101; these read NPLSG and GDGVVSN. Residues D226, D229, and L231 each coordinate Mg(2+). D285 serves as the catalytic Proton acceptor.

Belongs to the diacylglycerol/lipid kinase family. It depends on Mg(2+) as a cofactor.

It localises to the secreted. The protein localises to the cell wall. The enzyme catalyses a 1,2-diacyl-sn-glycerol + ATP = a 1,2-diacyl-sn-glycero-3-phosphate + ADP + H(+). It carries out the reaction N-hexadecanoylsphing-4-enine + ATP = N-(hexadecanoyl)-sphing-4-enine-1-phosphate + ADP + H(+). In terms of biological role, catalyzes the phosphorylation of diacylglycerol (DAG) into phosphatidic acid. Is involved in the biosynthesis of phosphatidylinositol mannosides (PIMs), probably via a role in the biosynthesis of phosphatidylinositol (PI), a PIM precursor, which is derived from phosphatidic acid. Is also able to phosphorylate other various amphipathic lipids of host and bacterial origin in vitro, such as ceramide. This chain is Diacylglycerol kinase (dagK), found in Mycobacterium tuberculosis (strain CDC 1551 / Oshkosh).